We begin with the raw amino-acid sequence, 388 residues long: Methylthioribose-1-phosphate isomerase (388 aa).

Asp-252 acts as the Proton donor in catalysis.

It belongs to the eIF-2B alpha/beta/delta subunits family. MtnA subfamily.

It localises to the cytoplasm. The protein localises to the nucleus. It carries out the reaction 5-(methylsulfanyl)-alpha-D-ribose 1-phosphate = 5-(methylsulfanyl)-D-ribulose 1-phosphate. It functions in the pathway amino-acid biosynthesis; L-methionine biosynthesis via salvage pathway; L-methionine from S-methyl-5-thio-alpha-D-ribose 1-phosphate: step 1/6. Catalyzes the interconversion of methylthioribose-1-phosphate (MTR-1-P) into methylthioribulose-1-phosphate (MTRu-1-P). This Verticillium alfalfae (strain VaMs.102 / ATCC MYA-4576 / FGSC 10136) (Verticillium wilt of alfalfa) protein is Methylthioribose-1-phosphate isomerase.